Consider the following 229-residue polypeptide: 5'-methylthioadenosine/S-adenosylhomocysteine nucleosidase (229 aa).

Glutamate 12 serves as the catalytic Proton acceptor. Substrate-binding positions include glycine 78, isoleucine 152, and 173-174 (ME). Aspartate 197 functions as the Proton donor in the catalytic mechanism.

This sequence belongs to the PNP/UDP phosphorylase family. MtnN subfamily.

The enzyme catalyses S-adenosyl-L-homocysteine + H2O = S-(5-deoxy-D-ribos-5-yl)-L-homocysteine + adenine. The catalysed reaction is S-methyl-5'-thioadenosine + H2O = 5-(methylsulfanyl)-D-ribose + adenine. It catalyses the reaction 5'-deoxyadenosine + H2O = 5-deoxy-D-ribose + adenine. It participates in amino-acid biosynthesis; L-methionine biosynthesis via salvage pathway; S-methyl-5-thio-alpha-D-ribose 1-phosphate from S-methyl-5'-thioadenosine (hydrolase route): step 1/2. In terms of biological role, catalyzes the irreversible cleavage of the glycosidic bond in both 5'-methylthioadenosine (MTA) and S-adenosylhomocysteine (SAH/AdoHcy) to adenine and the corresponding thioribose, 5'-methylthioribose and S-ribosylhomocysteine, respectively. Also cleaves 5'-deoxyadenosine, a toxic by-product of radical S-adenosylmethionine (SAM) enzymes, into 5-deoxyribose and adenine. The chain is 5'-methylthioadenosine/S-adenosylhomocysteine nucleosidase from Pasteurella multocida (strain Pm70).